A 412-amino-acid polypeptide reads, in one-letter code: Pentatricopeptide repeat-containing protein At3g60980, mitochondrial (412 aa).

A mitochondrion-targeting transit peptide spans 1–18 (MSLIGRLNLGRRFCTAVP). 9 PPR repeats span residues 69–104 (TTTI…NLRP), 105–139 (NSHC…GQVH), 143–178 (SDDS…TTYP), 179–213 (DHVA…FLIA), 230–264 (VAFL…NRLL), 266–296 (CAET…LLDK), 305–339 (DSDT…NDYL), 344–371 (IITR…DFGY), and 373–407 (DVNT…TLKE).

Belongs to the PPR family. P subfamily.

It is found in the mitochondrion. This chain is Pentatricopeptide repeat-containing protein At3g60980, mitochondrial, found in Arabidopsis thaliana (Mouse-ear cress).